The following is a 113-amino-acid chain: U11-theraphotoxin-Hhn1a (113 aa).

A signal peptide spans 1 to 21 (MNTVRVTFLLVFVLAVSLGQA). Residues 22–74 (DKDENRMEMQGKTEQGKSYLDFAENLLLQKLEELEAKLLEEDSEESRNSRQKR) constitute a propeptide that is removed on maturation. Disulfide bonds link Cys75–Cys90, Cys82–Cys95, and Cys89–Cys110.

This sequence belongs to the neurotoxin 14 (magi-1) family. 01 (HNTX-16) subfamily. In terms of tissue distribution, expressed by the venom gland.

Its subcellular location is the secreted. Probable ion channel inhibitor. This Cyriopagopus hainanus (Chinese bird spider) protein is U11-theraphotoxin-Hhn1a.